The sequence spans 446 residues: Na(+)-translocating NADH-quinone reductase subunit A (446 aa).

Belongs to the NqrA family. In terms of assembly, composed of six subunits; NqrA, NqrB, NqrC, NqrD, NqrE and NqrF.

It catalyses the reaction a ubiquinone + n Na(+)(in) + NADH + H(+) = a ubiquinol + n Na(+)(out) + NAD(+). Its function is as follows. NQR complex catalyzes the reduction of ubiquinone-1 to ubiquinol by two successive reactions, coupled with the transport of Na(+) ions from the cytoplasm to the periplasm. NqrA to NqrE are probably involved in the second step, the conversion of ubisemiquinone to ubiquinol. This Vibrio parahaemolyticus serotype O3:K6 (strain RIMD 2210633) protein is Na(+)-translocating NADH-quinone reductase subunit A.